The sequence spans 153 residues: Nucleoside diphosphate kinase (153 aa).

6 residues coordinate ATP: K13, F61, R89, T95, R106, and N116. T95 carries the post-translational modification Phosphothreonine. H119 functions as the Pros-phosphohistidine intermediate in the catalytic mechanism.

It belongs to the NDK family. In terms of assembly, homohexamer and homotetramer. Interacts with TOM40 preferentially in an unfolded, unphosphorylated form. Mg(2+) is required as a cofactor. In terms of processing, the N-terminus is blocked.

Its subcellular location is the cytoplasm. The protein localises to the mitochondrion intermembrane space. It carries out the reaction a 2'-deoxyribonucleoside 5'-diphosphate + ATP = a 2'-deoxyribonucleoside 5'-triphosphate + ADP. The catalysed reaction is a ribonucleoside 5'-diphosphate + ATP = a ribonucleoside 5'-triphosphate + ADP. Its function is as follows. Major role in the synthesis of nucleoside triphosphates other than ATP. The ATP gamma phosphate is transferred to the NDP beta phosphate via a ping-pong mechanism, using a phosphorylated active-site intermediate. Required for repair of UV radiation- and etoposide-induced DNA damage. The sequence is that of Nucleoside diphosphate kinase (YNK1) from Saccharomyces cerevisiae (strain ATCC 204508 / S288c) (Baker's yeast).